A 531-amino-acid chain; its full sequence is T-complex protein 1 subunit zeta (531 aa).

Ala2 carries the N-acetylalanine modification. Lys5 bears the N6-acetyllysine mark. Residue Gly39 participates in ADP binding. Gly39 lines the ATP pocket. Asp90 lines the Mg(2+) pocket. 6 residues coordinate ADP: Gly91, Thr92, Thr93, Ser94, Thr158, and Lys159. Residues Gly91, Thr92, and Thr93 each coordinate ATP. Lys199 carries the post-translational modification N6-acetyllysine. Ser205 carries the post-translational modification Phosphoserine. Residue Lys251 forms a Glycyl lysine isopeptide (Lys-Gly) (interchain with G-Cter in SUMO2) linkage. N6-acetyllysine occurs at positions 287, 365, 377, and 388. ADP is bound at residue Ala411. ATP is bound by residues Ala411, Gly412, Asp496, and Lys501. Residue Asp496 participates in ADP binding.

Belongs to the TCP-1 chaperonin family. In terms of assembly, component of the chaperonin-containing T-complex (TRiC), a hexadecamer composed of two identical back-to-back stacked rings enclosing a protein folding chamber. Each ring is made up of eight different subunits: TCP1/CCT1, CCT2, CCT3, CCT4, CCT5, CCT6A/CCT6, CCT7, CCT8. Interacts with PACRG.

It is found in the cytoplasm. The catalysed reaction is ATP + H2O = ADP + phosphate + H(+). Component of the chaperonin-containing T-complex (TRiC), a molecular chaperone complex that assists the folding of actin, tubulin and other proteins upon ATP hydrolysis. The TRiC complex mediates the folding of WRAP53/TCAB1, thereby regulating telomere maintenance. The sequence is that of T-complex protein 1 subunit zeta (CCT6) from Pongo abelii (Sumatran orangutan).